The primary structure comprises 139 residues: Large-conductance mechanosensitive channel (139 aa).

The next 3 membrane-spanning stretches (helical) occupy residues 16–36, 40–60, and 79–99; these read VIDL…VKAL, IVMP…LAWV, and GAFI…FMLV.

The protein belongs to the MscL family. Homopentamer.

It localises to the cell inner membrane. Channel that opens in response to stretch forces in the membrane lipid bilayer. May participate in the regulation of osmotic pressure changes within the cell. This Phenylobacterium zucineum (strain HLK1) protein is Large-conductance mechanosensitive channel.